Here is a 103-residue protein sequence, read N- to C-terminus: Large ribosomal subunit protein bL21 (103 aa).

This sequence belongs to the bacterial ribosomal protein bL21 family. In terms of assembly, part of the 50S ribosomal subunit. Contacts protein L20.

Functionally, this protein binds to 23S rRNA in the presence of protein L20. In Clostridioides difficile (strain 630) (Peptoclostridium difficile), this protein is Large ribosomal subunit protein bL21.